The sequence spans 540 residues: Phenylalanine--tRNA ligase beta subunit (540 aa).

One can recognise a B5 domain in the interval 268-342 (LRHTSVPFSL…MAYGYDRFTL (75 aa)). The Mg(2+) site is built by D320, D326, E329, and D330.

It belongs to the phenylalanyl-tRNA synthetase beta subunit family. Type 2 subfamily. As to quaternary structure, tetramer of two alpha and two beta subunits. The cofactor is Mg(2+).

It localises to the cytoplasm. It catalyses the reaction tRNA(Phe) + L-phenylalanine + ATP = L-phenylalanyl-tRNA(Phe) + AMP + diphosphate + H(+). The chain is Phenylalanine--tRNA ligase beta subunit from Metallosphaera sedula (strain ATCC 51363 / DSM 5348 / JCM 9185 / NBRC 15509 / TH2).